The sequence spans 496 residues: O-acetyltransferase cpsE (496 aa).

A compositionally biased stretch (polar residues) spans 203–217; it reads IGTQGQLPDGVQSSD. Residues 203 to 228 are disordered; sequence IGTQGQLPDGVQSSDDPTDGAGDIFE.

Belongs to the fumigaclavine B O-acetyltransferase family.

It catalyses the reaction campesine A + acetyl-CoA = campesine C + CoA. It functions in the pathway alkaloid biosynthesis. In terms of biological role, O-acetyltransferase; part of the gene cluster that mediates the biosynthesis of campesine G, a dimeric indole piperazine alkaloid that shows good insecticidal activity Galleria mellonella. Within the pathway, cpsE acetylates N13 of campesine A to produce campesine C. CpsE produces an inseparable mixture of two acyl-atropisomers due to the spontaneous rotation of an acyl group at N13 of piperazine ring. The non-canonical non-ribosomal peptide synthetase cpsA catalyzes the first steps of the pathway by producing L-tryptophanal and L-valinal from their respective amino-acids. These products condensate spontaneously to form trypyl-valyl pyrazine also known as didehydrocampesine A. The NmrA-like family domain-containing oxidoreductase cpsB is the next enzyme in cps pathway and reduces the unstable didehydrocampesine A to campesine A. The methyltransferase cpsF and the acetyltransferase cpsE both recognize N13 of piperazine ring to carry out methylation and acetylation of campesine A to produce campesine C and B, respectively. The cytochrome P450 monooxygenase cpsD then acts as a dimerase that catalyzes oxidative heterocoupling between campesine B and C to produce heterodimers with unexpected 6/5/6/6/6/6/5/6 eight-ring scaffold called campesine D. Finally,the cytochrome P450 monooxygenase cpsC is a regioselective dehydrogenase that catalyzes dehydrogenation reaction towards C2-N1 to produce campesine G. This chain is O-acetyltransferase cpsE, found in Aspergillus campestris (strain IBT 28561).